We begin with the raw amino-acid sequence, 186 residues long: Ribosome-recycling factor (186 aa).

The protein belongs to the RRF family.

The protein localises to the cytoplasm. Functionally, responsible for the release of ribosomes from messenger RNA at the termination of protein biosynthesis. May increase the efficiency of translation by recycling ribosomes from one round of translation to another. The sequence is that of Ribosome-recycling factor from Brucella abortus (strain S19).